We begin with the raw amino-acid sequence, 219 residues long: ATP synthase delta chain, chloroplastic (219 aa).

The transit peptide at 1-33 (MLAAKSIAGPRAFKASAVRAAPKAGRRTVVVMA) directs the protein to the chloroplast.

This sequence belongs to the ATPase delta chain family. As to quaternary structure, F-type ATPases have 2 components, F(1) - the catalytic core - and F(0) - the membrane proton channel. F(1) has five subunits: alpha(3), beta(3), gamma(1), delta(1), epsilon(1). F(0) has four main subunits: a(1), b(1), b'(1) and c(10-14). The alpha and beta chains form an alternating ring which encloses part of the gamma chain. F(1) is attached to F(0) by a central stalk formed by the gamma and epsilon chains, while a peripheral stalk is formed by the delta, b and b' chains.

It localises to the plastid. The protein localises to the chloroplast thylakoid membrane. In terms of biological role, f(1)F(0) ATP synthase produces ATP from ADP in the presence of a proton or sodium gradient. F-type ATPases consist of two structural domains, F(1) containing the extramembraneous catalytic core and F(0) containing the membrane proton channel, linked together by a central stalk and a peripheral stalk. During catalysis, ATP synthesis in the catalytic domain of F(1) is coupled via a rotary mechanism of the central stalk subunits to proton translocation. Functionally, this protein seems to be part of the stalk that links CF(0) to CF(1). It either transmits conformational changes from CF(0) into CF(1) or is implicated in proton conduction. The protein is ATP synthase delta chain, chloroplastic of Chlamydomonas reinhardtii (Chlamydomonas smithii).